Reading from the N-terminus, the 364-residue chain is Methylthioribose-1-phosphate isomerase (364 aa).

The active-site Proton donor is the D254.

Belongs to the eIF-2B alpha/beta/delta subunits family. MtnA subfamily.

The protein localises to the cytoplasm. It is found in the nucleus. The enzyme catalyses 5-(methylsulfanyl)-alpha-D-ribose 1-phosphate = 5-(methylsulfanyl)-D-ribulose 1-phosphate. It functions in the pathway amino-acid biosynthesis; L-methionine biosynthesis via salvage pathway; L-methionine from S-methyl-5-thio-alpha-D-ribose 1-phosphate: step 1/6. In terms of biological role, catalyzes the interconversion of methylthioribose-1-phosphate (MTR-1-P) into methylthioribulose-1-phosphate (MTRu-1-P). This is Methylthioribose-1-phosphate isomerase from Drosophila sechellia (Fruit fly).